A 171-amino-acid polypeptide reads, in one-letter code: Protein-export protein SecB (171 aa).

Belongs to the SecB family. As to quaternary structure, homotetramer, a dimer of dimers. One homotetramer interacts with 1 SecA dimer.

It is found in the cytoplasm. Its function is as follows. One of the proteins required for the normal export of preproteins out of the cell cytoplasm. It is a molecular chaperone that binds to a subset of precursor proteins, maintaining them in a translocation-competent state. It also specifically binds to its receptor SecA. The chain is Protein-export protein SecB from Granulibacter bethesdensis (strain ATCC BAA-1260 / CGDNIH1).